Consider the following 486-residue polypeptide: Hydrogenobyrinate a,c-diamide synthase (486 aa).

The span at 254-272 (SPPPPLPVPSPGAAPPDPL) shows a compositional bias: pro residues. Residues 254–284 (SPPPPLPVPSPGAAPPDPLVRPGRPRPQAPD) are disordered. The 186-residue stretch at 289–474 (RVAMASGAAF…LHTHWAAEPG (186 aa)) folds into the GATase cobBQ-type domain. C372 serves as the catalytic Nucleophile.

The protein belongs to the CobB/CbiA family. The cofactor is Mg(2+).

The catalysed reaction is hydrogenobyrinate + 2 L-glutamine + 2 ATP + 2 H2O = hydrogenobyrinate a,c-diamide + 2 L-glutamate + 2 ADP + 2 phosphate + 2 H(+). The protein operates within cofactor biosynthesis; adenosylcobalamin biosynthesis; cob(II)yrinate a,c-diamide from precorrin-2 (aerobic route): step 9/10. Catalyzes the ATP-dependent amidation of the two carboxylate groups at positions a and c of hydrogenobyrinate, using either L-glutamine or ammonia as the nitrogen source. The chain is Hydrogenobyrinate a,c-diamide synthase from Streptomyces coelicolor (strain ATCC BAA-471 / A3(2) / M145).